The primary structure comprises 164 residues: Transcription antitermination protein NusB (164 aa).

The protein belongs to the NusB family.

Its function is as follows. Involved in transcription antitermination. Required for transcription of ribosomal RNA (rRNA) genes. Binds specifically to the boxA antiterminator sequence of the ribosomal RNA (rrn) operons. The polypeptide is Transcription antitermination protein NusB (Mycolicibacterium gilvum (strain PYR-GCK) (Mycobacterium gilvum (strain PYR-GCK))).